The primary structure comprises 497 residues: Nucleoside transporter 1 (497 aa).

The Cytoplasmic portion of the chain corresponds to 1 to 26 (MSLKGGTAAPAPMAPPRKWYDMTSAE). The chain crosses the membrane as a helical span at residues 27–47 (FYVYVVAFMCGISIMMPINAV). Residues 48 to 77 (FSAPSYMLEYYLYATKDPFLVPKMTNFWTN) are Extracellular-facing. The chain crosses the membrane as a helical span at residues 78-98 (VMTYYNLISMVTSLVVEPLTL). Over 99–107 (LKSFRKIPM) the chain is Cytoplasmic. The chain crosses the membrane as a helical span at residues 108 to 128 (LVRLLGGLSVLIIEIIVLMVV). Topologically, residues 129–135 (PARGTTE) are extracellular. A helical membrane pass occupies residues 136-156 (AGAVATMCIAGFIGGLGTSIF). The Cytoplasmic segment spans residues 157 to 172 (ESTVYGMFGAFPPSFT). Residues 173-193 (SIMMGGVGISGVLTSLIQIIV) traverse the membrane as a helical segment. Residues 194–208 (KAALPDTYEGVKKQS) lie on the Extracellular side of the membrane. Residues 209-229 (YIYYSLDVGIQAATFIALIMM) traverse the membrane as a helical segment. Residues 230 to 337 (RFNSFAQLHF…SVFSVLRSVK (108 aa)) lie on the Cytoplasmic side of the membrane. Over residues 286 to 299 (NAEAHKDDPLAERE) the composition is skewed to basic and acidic residues. A disordered region spans residues 286–316 (NAEAHKDDPLAERELSEEESGDSRAVEAAGE). The helical transmembrane segment at 338–358 (WMFVACGFNFLITLFLFPGIA) threads the bilayer. At 359-361 (TGM) the chain is on the extracellular side. The helical transmembrane segment at 362-382 (FPESKWFATVAVFIFNCCDVL) threads the bilayer. Residues 383 to 400 (GRFSSAFRITWPRRYNQR) are Cytoplasmic-facing. A helical membrane pass occupies residues 401 to 421 (WIIVAASFARVIFVPLLLLHS). Over 422–432 (YHYIPSEAYGY) the chain is Extracellular. The helical transmembrane segment at 433–453 (VMQVVFGLSSGYIASMALVLG) threads the bilayer. The Cytoplasmic segment spans residues 454–465 (PQSKGIDNDGKR). Residues 466-486 (FVAGTLMGISILVGGTIGTVL) form a helical membrane-spanning segment. Topologically, residues 487 to 497 (SIMTQTIRETY) are extracellular.

It belongs to the SLC29A/ENT transporter (TC 2.A.57) family.

It is found in the cell membrane. The catalysed reaction is adenosine(in) = adenosine(out). It catalyses the reaction hypoxanthine(out) = hypoxanthine(in). The enzyme catalyses inosine(in) = inosine(out). It carries out the reaction uridine(out) = uridine(in). The catalysed reaction is cytidine(in) = cytidine(out). Nucleoside transporter with broad substrate specificity. Transports adenosine with high affinity. Can also transport hypoxanthine, inosine, uridine and cytidine. This is Nucleoside transporter 1 from Crithidia fasciculata.